We begin with the raw amino-acid sequence, 245 residues long: Orotidine 5'-phosphate decarboxylase (245 aa).

Substrate contacts are provided by residues D22, K44, 71–80 (DLKFHDIPNT), T131, R192, Q201, G221, and R222. The active-site Proton donor is K73.

Belongs to the OMP decarboxylase family. Type 1 subfamily. As to quaternary structure, homodimer.

It catalyses the reaction orotidine 5'-phosphate + H(+) = UMP + CO2. It functions in the pathway pyrimidine metabolism; UMP biosynthesis via de novo pathway; UMP from orotate: step 2/2. Catalyzes the decarboxylation of orotidine 5'-monophosphate (OMP) to uridine 5'-monophosphate (UMP). The polypeptide is Orotidine 5'-phosphate decarboxylase (Salmonella choleraesuis (strain SC-B67)).